Consider the following 310-residue polypeptide: Cytochrome f (310 aa).

The first 23 residues, 1–23, serve as a signal peptide directing secretion; that stretch reads MRRLIPILLGSLVLSLSILVAPA. Residues Y28, C48, C51, and H52 each contribute to the heme site. The chain crosses the membrane as a helical span at residues 277–297; that stretch reads IYGLLAFFVAVSLAQILLVLK.

Belongs to the cytochrome f family. In terms of assembly, the 4 large subunits of the cytochrome b6-f complex are cytochrome b6, subunit IV (17 kDa polypeptide, PetD), cytochrome f and the Rieske protein, while the 4 small subunits are PetG, PetL, PetM and PetN. The complex functions as a dimer. Heme serves as cofactor.

Its subcellular location is the cellular thylakoid membrane. Its function is as follows. Component of the cytochrome b6-f complex, which mediates electron transfer between photosystem II (PSII) and photosystem I (PSI), cyclic electron flow around PSI, and state transitions. This Prochlorococcus marinus (strain MIT 9313) protein is Cytochrome f.